We begin with the raw amino-acid sequence, 177 residues long: Putative thioredoxin peroxidase (177 aa).

Residues 1 to 158 (MFPKTLTDSK…IIRLIDAITF (158 aa)) form the Thioredoxin domain. Residue cysteine 45 is the Cysteine sulfenic acid (-SOH) intermediate of the active site.

Belongs to the peroxiredoxin family. AhpC/Prx1 subfamily. In terms of assembly, homodimer; disulfide-linked, upon oxidation.

The catalysed reaction is a hydroperoxide + [thioredoxin]-dithiol = an alcohol + [thioredoxin]-disulfide + H2O. Thiol-specific peroxidase that catalyzes the reduction of hydrogen peroxide and organic hydroperoxides to water and alcohols, respectively. Plays a role in cell protection against oxidative stress by detoxifying peroxides and as sensor of hydrogen peroxide-mediated signaling events. The polypeptide is Putative thioredoxin peroxidase (Encephalitozoon cuniculi (strain GB-M1) (Microsporidian parasite)).